Consider the following 445-residue polypeptide: Probable glycine dehydrogenase (decarboxylating) subunit 1 (445 aa).

It belongs to the GcvP family. N-terminal subunit subfamily. The glycine cleavage system is composed of four proteins: P, T, L and H. In this organism, the P 'protein' is a heterodimer of two subunits.

The catalysed reaction is N(6)-[(R)-lipoyl]-L-lysyl-[glycine-cleavage complex H protein] + glycine + H(+) = N(6)-[(R)-S(8)-aminomethyldihydrolipoyl]-L-lysyl-[glycine-cleavage complex H protein] + CO2. Its function is as follows. The glycine cleavage system catalyzes the degradation of glycine. The P protein binds the alpha-amino group of glycine through its pyridoxal phosphate cofactor; CO(2) is released and the remaining methylamine moiety is then transferred to the lipoamide cofactor of the H protein. This is Probable glycine dehydrogenase (decarboxylating) subunit 1 from Citrifermentans bemidjiense (strain ATCC BAA-1014 / DSM 16622 / JCM 12645 / Bem) (Geobacter bemidjiensis).